The chain runs to 442 residues: Probable diguanylate cyclase DgcI (442 aa).

A signal peptide spans Met1–Ala23. The N-palmitoyl cysteine moiety is linked to residue Cys24. Cys24 carries the S-diacylglycerol cysteine lipid modification. Residues Leu231–Val251 form a helical membrane-spanning segment. One can recognise a GGDEF domain in the interval Lys319–Gln442. Asp327 serves as a coordination point for Mg(2+). Substrate is bound by residues Asn335, His340, and Asp344. Asp371 lines the Mg(2+) pocket.

Homodimer. Requires Mg(2+) as cofactor.

The protein resides in the cell membrane. It catalyses the reaction 2 GTP = 3',3'-c-di-GMP + 2 diphosphate. It functions in the pathway purine metabolism; 3',5'-cyclic di-GMP biosynthesis. Its function is as follows. Catalyzes the synthesis of cyclic-di-GMP (c-di-GMP) via the condensation of 2 GTP molecules. This is Probable diguanylate cyclase DgcI from Escherichia coli (strain K12).